We begin with the raw amino-acid sequence, 479 residues long: Serine palmitoyltransferase 1 (479 aa).

Over 1–16 (MFLFDIYNNILYYTKE) the chain is Lumenal. Residues 17–37 (FIVTSTSPNLFIHGLMAVFII) traverse the membrane as a helical segment. The Cytoplasmic segment spans residues 38–479 (YLLTKRPFKP…KCTSFVLESN (442 aa)).

The protein belongs to the class-II pyridoxal-phosphate-dependent aminotransferase family. Forms a heterodimer with sptB. The cofactor is pyridoxal 5'-phosphate.

The protein localises to the endoplasmic reticulum membrane. The enzyme catalyses L-serine + hexadecanoyl-CoA + H(+) = 3-oxosphinganine + CO2 + CoA. It functions in the pathway lipid metabolism; sphingolipid metabolism. Functionally, component of serine palmitoyltransferase (SPT), which catalyzes the committed step in the synthesis of sphingolipids, the condensation of serine with palmitoyl CoA to form the long chain base 3-ketosphinganine. This chain is Serine palmitoyltransferase 1 (sptA), found in Dictyostelium discoideum (Social amoeba).